Reading from the N-terminus, the 122-residue chain is Small ribosomal subunit protein uS12 (122 aa).

Belongs to the universal ribosomal protein uS12 family. In terms of assembly, part of the 30S ribosomal subunit. Contacts proteins S8 and S17. May interact with IF1 in the 30S initiation complex.

With S4 and S5 plays an important role in translational accuracy. Functionally, interacts with and stabilizes bases of the 16S rRNA that are involved in tRNA selection in the A site and with the mRNA backbone. Located at the interface of the 30S and 50S subunits, it traverses the body of the 30S subunit contacting proteins on the other side and probably holding the rRNA structure together. The combined cluster of proteins S8, S12 and S17 appears to hold together the shoulder and platform of the 30S subunit. This is Small ribosomal subunit protein uS12 from Corynebacterium efficiens (strain DSM 44549 / YS-314 / AJ 12310 / JCM 11189 / NBRC 100395).